Consider the following 205-residue polypeptide: Glutathione peroxidase 1 (205 aa).

Serine 37 bears the Phosphoserine mark. Selenocysteine 52 is an active-site residue. Position 52 (selenocysteine 52) is a non-standard amino acid, selenocysteine. Lysine 91 and lysine 117 each carry N6-acetyllysine; alternate. Residues lysine 91 and lysine 117 each carry the N6-succinyllysine; alternate modification. A glycan (N-linked (Glc) (glycation) lysine; in vitro) is linked at lysine 117. Residue lysine 124 is modified to N6-acetyllysine. Position 151 is an N6-acetyllysine; alternate (lysine 151). At lysine 151 the chain carries N6-succinyllysine; alternate. Residues serine 200 and serine 204 each carry the phosphoserine modification.

It belongs to the glutathione peroxidase family. As to quaternary structure, homotetramer. Interacts with MIEN1. Post-translationally, during periods of oxidative stress, Sec-52 may react with a superoxide radical, irreversibly lose hydroselenide and be converted to dehydroalanine.

The protein resides in the cytoplasm. It is found in the mitochondrion. It catalyses the reaction 2 glutathione + H2O2 = glutathione disulfide + 2 H2O. The enzyme catalyses a hydroperoxy polyunsaturated fatty acid + 2 glutathione = a hydroxy polyunsaturated fatty acid + glutathione disulfide + H2O. It carries out the reaction tert-butyl hydroperoxide + 2 glutathione = tert-butanol + glutathione disulfide + H2O. The catalysed reaction is cumene hydroperoxide + 2 glutathione = 2-phenylpropan-2-ol + glutathione disulfide + H2O. It catalyses the reaction (13S)-hydroperoxy-(9Z,11E)-octadecadienoate + 2 glutathione = (13S)-hydroxy-(9Z,11E)-octadecadienoate + glutathione disulfide + H2O. The enzyme catalyses (9S)-hydroperoxy-(10E,12Z)-octadecadienoate + 2 glutathione = (9S)-hydroxy-(10E,12Z)-octadecadienoate + glutathione disulfide + H2O. It carries out the reaction (5S)-hydroperoxy-(6E,8Z,11Z,14Z)-eicosatetraenoate + 2 glutathione = (5S)-hydroxy-(6E,8Z,11Z,14Z)-eicosatetraenoate + glutathione disulfide + H2O. The catalysed reaction is (12S)-hydroperoxy-(5Z,8Z,10E,14Z)-eicosatetraenoate + 2 glutathione = (12S)-hydroxy-(5Z,8Z,10E,14Z)-eicosatetraenoate + glutathione disulfide + H2O. It catalyses the reaction (12R)-hydroperoxy-(5Z,8Z,10E,14Z)-eicosatetraenoate + 2 glutathione = (12R)-hydroxy-(5Z,8Z,10E,14Z)-eicosatetraenoate + glutathione disulfide + H2O. The enzyme catalyses (15S)-hydroperoxy-(5Z,8Z,11Z,13E)-eicosatetraenoate + 2 glutathione = (15S)-hydroxy-(5Z,8Z,11Z,13E)-eicosatetraenoate + glutathione disulfide + H2O. It carries out the reaction (5S)-hydroperoxy-(6E,8Z,11Z,14Z,17Z)-eicosapentaenoate + 2 glutathione = (5S)-hydroxy-(6E,8Z,11Z,14Z,17Z)-eicosapentaenoate + glutathione disulfide + H2O. The catalysed reaction is (15S)-hydroperoxy-(5Z,8Z,11Z,13E,17Z)-eicosapentaenoate + 2 glutathione = (15S)-hydroxy-(5Z,8Z,11Z,13E,17Z)-eicosapentaenoate + glutathione disulfide + H2O. It catalyses the reaction (15S)-hydroperoxy-(11Z,13E)-eicosadienoate + 2 glutathione = (15S)-hydroxy-(11Z,13E)-eicosadienoate + glutathione disulfide + H2O. The enzyme catalyses (17S)-hydroperoxy-(4Z,7Z,10Z,13Z,15E,19Z)-docosahexaenoate + 2 glutathione = (17S)-hydroxy-(4Z,7Z,10Z,13Z,15E,19Z)-docosahexaenoate + glutathione disulfide + H2O. In terms of biological role, catalyzes the reduction of hydroperoxides in a glutathione-dependent manner thus regulating cellular redox homeostasis. Can reduce small soluble hydroperoxides such as H2O2, cumene hydroperoxide and tert-butyl hydroperoxide, as well as several fatty acid-derived hydroperoxides. In platelets catalyzes the reduction of 12-hydroperoxyeicosatetraenoic acid, the primary product of the arachidonate 12-lipoxygenase pathway. The chain is Glutathione peroxidase 1 (GPX1) from Bos taurus (Bovine).